A 129-amino-acid chain; its full sequence is Ribulose bisphosphate carboxylase small subunit (129 aa).

The segment covering 104 to 120 (ENEPSLRMTRTESDGRS) has biased composition (basic and acidic residues). Residues 104 to 129 (ENEPSLRMTRTESDGRSQHYTWETQR) form a disordered region.

This sequence belongs to the RuBisCO small chain family. Heterohexadecamer of 8 large and 8 small subunits.

Functionally, ruBisCO catalyzes two reactions: the carboxylation of D-ribulose 1,5-bisphosphate, the primary event in carbon dioxide fixation, as well as the oxidative fragmentation of the pentose substrate. Both reactions occur simultaneously and in competition at the same active site. Although the small subunit is not catalytic it is essential for maximal activity. The chain is Ribulose bisphosphate carboxylase small subunit from Sinorhizobium medicae (strain WSM419) (Ensifer medicae).